The chain runs to 305 residues: D-alanine--D-alanine ligase (305 aa).

The ATP-grasp domain occupies lysine 107–glutamine 299. Proline 134–glutamine 185 is a binding site for ATP. Mg(2+)-binding residues include aspartate 253, glutamate 266, and asparagine 268.

It belongs to the D-alanine--D-alanine ligase family. Mg(2+) serves as cofactor. Mn(2+) is required as a cofactor.

It localises to the cytoplasm. It catalyses the reaction 2 D-alanine + ATP = D-alanyl-D-alanine + ADP + phosphate + H(+). It participates in cell wall biogenesis; peptidoglycan biosynthesis. Its function is as follows. Cell wall formation. This is D-alanine--D-alanine ligase from Citrifermentans bemidjiense (strain ATCC BAA-1014 / DSM 16622 / JCM 12645 / Bem) (Geobacter bemidjiensis).